Reading from the N-terminus, the 183-residue chain is Large ribosomal subunit protein eL18 (183 aa).

Residues 150–183 (RHFGPAPGAPRSHTKPYVRTKGHEKARPSRRANV) are disordered.

Belongs to the eukaryotic ribosomal protein eL18 family.

The protein localises to the cytoplasm. The protein is Large ribosomal subunit protein eL18 (RpL18) of Bombyx mori (Silk moth).